The following is a 955-amino-acid chain: uncharacterized protein (955 aa).

The Importin N-terminal domain occupies 23-90; the sequence is ANNYLEEFQK…RNSLLQLFLA (68 aa).

This is an uncharacterized protein from Schizosaccharomyces pombe (strain 972 / ATCC 24843) (Fission yeast).